The sequence spans 534 residues: CTP synthase (534 aa).

Residues 1–267 (MTKYIFVTGG…DQIVCDHLKL (267 aa)) form an amidoligase domain region. Ser-13 lines the CTP pocket. UTP is bound at residue Ser-13. 14 to 19 (SIGKGI) serves as a coordination point for ATP. Tyr-54 contacts L-glutamine. Asp-71 serves as a coordination point for ATP. Positions 71 and 141 each coordinate Mg(2+). Residues 148 to 150 (DIE), 188 to 193 (KTKPTQ), and Lys-224 contribute to the CTP site. UTP-binding positions include 188 to 193 (KTKPTQ) and Lys-224. Residue 240-242 (RDV) participates in ATP binding. Positions 292 to 534 (KIALVGKYVE…FVTAAIKNSN (243 aa)) constitute a Glutamine amidotransferase type-1 domain. Gly-354 is a binding site for L-glutamine. Residue Cys-381 is the Nucleophile; for glutamine hydrolysis of the active site. L-glutamine contacts are provided by residues 382 to 385 (LGMQ), Glu-405, and Arg-463. Active-site residues include His-508 and Glu-510.

It belongs to the CTP synthase family. As to quaternary structure, homotetramer.

The catalysed reaction is UTP + L-glutamine + ATP + H2O = CTP + L-glutamate + ADP + phosphate + 2 H(+). It carries out the reaction L-glutamine + H2O = L-glutamate + NH4(+). The enzyme catalyses UTP + NH4(+) + ATP = CTP + ADP + phosphate + 2 H(+). It participates in pyrimidine metabolism; CTP biosynthesis via de novo pathway; CTP from UDP: step 2/2. Allosterically activated by GTP, when glutamine is the substrate; GTP has no effect on the reaction when ammonia is the substrate. The allosteric effector GTP functions by stabilizing the protein conformation that binds the tetrahedral intermediate(s) formed during glutamine hydrolysis. Inhibited by the product CTP, via allosteric rather than competitive inhibition. Catalyzes the ATP-dependent amination of UTP to CTP with either L-glutamine or ammonia as the source of nitrogen. Regulates intracellular CTP levels through interactions with the four ribonucleotide triphosphates. This is CTP synthase from Streptococcus pyogenes serotype M2 (strain MGAS10270).